Consider the following 712-residue polypeptide: Lactoperoxidase (712 aa).

An N-terminal signal peptide occupies residues 1–22 (MWVCLQLPVFLASVTLFEVAAS). The propeptide occupies 23-100 (DTIAQAASTT…WEESFKRLRR (78 aa)). A glycan (N-linked (GlcNAc...) (complex) asparagine; alternate) is linked at Asn106. An N-linked (GlcNAc...) (hybrid) asparagine; alternate glycan is attached at Asn106. 4 disulfides stabilise this stretch: Cys123–Cys284, Cys132–Cys145, Cys246–Cys256, and Cys250–Cys274. An N-linked (GlcNAc...) (complex) asparagine; alternate glycan is attached at Asn212. Asn212 is a glycosylation site (N-linked (GlcNAc...) (high mannose) asparagine; alternate). Asp225 contributes to the heme b binding site. His226 serves as the catalytic Proton acceptor. Asp227 lines the Ca(2+) pocket. Ca(2+) is bound by residues Thr301, Phe303, Asp305, and Ser307. Ser315 bears the Phosphoserine mark. N-linked (GlcNAc...) (high mannose) asparagine glycosylation occurs at Asn322. A disulfide bond links Cys354 and Cys365. N-linked (GlcNAc...) asparagine glycosylation occurs at Asn358. Glu375 contacts heme b. Residue Asn449 is glycosylated (N-linked (GlcNAc...) (complex) asparagine; alternate). Asn449 is a glycosylation site (N-linked (GlcNAc...) (hybrid) asparagine; alternate). Asn449 carries an N-linked (GlcNAc...) (high mannose) asparagine; alternate glycan. His468 contributes to the heme b binding site. A 3'-nitrotyrosine modification is found at Tyr482. Cystine bridges form between Cys573-Cys630 and Cys671-Cys696.

The protein belongs to the peroxidase family. XPO subfamily. Ca(2+) is required as a cofactor. Heme b serves as cofactor. Mammary gland; milk.

The protein localises to the secreted. It localises to the cytoplasm. The catalysed reaction is 2 a phenolic donor + H2O2 = 2 a phenolic radical donor + 2 H2O. The enzyme catalyses thiocyanate + H2O2 + H(+) = hypothiocyanous acid + H2O. It carries out the reaction iodide + H2O2 = hypoiodite + H2O. Heme-containing oxidoreductase which catalyzes the conversion of thiocyanate (SCN(-)) into antimicrobial agent hypothiocyanous acid (OSCN(-)) in the presence of hydrogen peroxide (H2O2). Also involved in the conversion of iodide (I(-)) into hypoiodite (IO(-)) in the presence of H2O2. Responsible for the inactivation of a wide range of micro-organisms and hence, important component of defense mechanism. Shows antibacterial properties against E.coli, K.pneumoniae, P.aeruginosa, S.sonnei, S.saphrophyticus, S.epidermidis and S.dysenteriae. May protect the udder from infection and may promote growth in newborns. May be implicated in airway host defense against infection. May contribute to maintaining an appropriate H2O2 cellular level, therefore protecting cells from H2O2-caused injuries and inflammation. This chain is Lactoperoxidase, found in Bubalus bubalis (Domestic water buffalo).